The sequence spans 297 residues: 4-hydroxy-tetrahydrodipicolinate synthase (297 aa).

T51 provides a ligand contact to pyruvate. The Proton donor/acceptor role is filled by Y139. Catalysis depends on K167, which acts as the Schiff-base intermediate with substrate. Position 209 (V209) interacts with pyruvate.

The protein belongs to the DapA family. In terms of assembly, homotetramer; dimer of dimers.

It localises to the cytoplasm. The enzyme catalyses L-aspartate 4-semialdehyde + pyruvate = (2S,4S)-4-hydroxy-2,3,4,5-tetrahydrodipicolinate + H2O + H(+). Its pathway is amino-acid biosynthesis; L-lysine biosynthesis via DAP pathway; (S)-tetrahydrodipicolinate from L-aspartate: step 3/4. Catalyzes the condensation of (S)-aspartate-beta-semialdehyde [(S)-ASA] and pyruvate to 4-hydroxy-tetrahydrodipicolinate (HTPA). This is 4-hydroxy-tetrahydrodipicolinate synthase from Albidiferax ferrireducens (strain ATCC BAA-621 / DSM 15236 / T118) (Rhodoferax ferrireducens).